A 464-amino-acid polypeptide reads, in one-letter code: ATP-dependent protease ATPase subunit HslU (464 aa).

Residues Ile19, 61-66, Asp277, Glu342, and Arg414 contribute to the ATP site; that span reads GVGKTE.

The protein belongs to the ClpX chaperone family. HslU subfamily. A double ring-shaped homohexamer of HslV is capped on each side by a ring-shaped HslU homohexamer. The assembly of the HslU/HslV complex is dependent on binding of ATP.

The protein localises to the cytoplasm. In terms of biological role, ATPase subunit of a proteasome-like degradation complex; this subunit has chaperone activity. The binding of ATP and its subsequent hydrolysis by HslU are essential for unfolding of protein substrates subsequently hydrolyzed by HslV. HslU recognizes the N-terminal part of its protein substrates and unfolds these before they are guided to HslV for hydrolysis. The chain is ATP-dependent protease ATPase subunit HslU from Lactobacillus gasseri (strain ATCC 33323 / DSM 20243 / BCRC 14619 / CIP 102991 / JCM 1131 / KCTC 3163 / NCIMB 11718 / NCTC 13722 / AM63).